The sequence spans 1232 residues: Histone-lysine N-methyltransferase MECOM (1232 aa).

Residues 22–68 are disordered; that stretch reads PEIPLEEMPDADADGITSVPSLHIQEPCSPATSSESFTPKEGSPYKA. Residues 25–34 show a composition bias toward acidic residues; sequence PLEEMPDADA. Positions 80–192 constitute an SET domain; the sequence is DEFELRESTM…PGEELLLFMK (113 aa). Residues Lys-101 and Lys-192 each participate in a glycyl lysine isopeptide (Lys-Gly) (interchain with G-Cter in SUMO2) cross-link. Residues 191–442 are interaction with SUV39H1 and probably MAPK9 and SMAD3; the sequence is MKSEEDPHEP…NHFAAGGFFG (252 aa). 5 C2H2-type zinc fingers span residues 211–238, 265–287, 293–315, 321–344, and 350–372; these read HRCEDCDQLFESKAELADHQKFPCSTPH, QDCKECDRVFPDLQSLEKHMLSH, YKCDQCPKAFNWKSNLIRHQMSH, YECENCAKVFTDPSNLQRHIRSQH, and HACPECGKTFATSSGLKQHKHIH. Residue Lys-294 forms a Glycyl lysine isopeptide (Lys-Gly) (interchain with G-Cter in SUMO2) linkage. Residues Lys-369 and Lys-376 each participate in a glycyl lysine isopeptide (Lys-Gly) (interchain with G-Cter in SUMO2) cross-link. Residues 378-400 form a C2H2-type 6 zinc finger; the sequence is FICEVCHKSYTQFSNLCRHKRMH. Residues 407–429 form a C2H2-type 7; atypical zinc finger; it reads IKCKDCGQMFSTTSSLNKHRRFC. Glycyl lysine isopeptide (Lys-Gly) (interchain with G-Cter in SUMO2) cross-links involve residues Lys-432, Lys-525, Lys-545, Lys-549, and Lys-557. The interval 548 to 622 is disordered; that stretch reads SKHPPVGDNK…KCKENGKMFK (75 aa). The segment covering 562–577 has biased composition (basic and acidic residues); sequence LPERSSEERPLEKISD. The span at 588–600 shows a compositional bias: polar residues; it reads STPSGSDLETTSG. Basic and acidic residues predominate over residues 608-622; the sequence is ESDKEKCKENGKMFK. Positions 611-624 match the Nuclear localization signal motif; that stretch reads KEKCKENGKMFKDK. Lys-624 participates in a covalent cross-link: Glycyl lysine isopeptide (Lys-Gly) (interchain with G-Cter in SUMO2). Residue Ser-626 is modified to Phosphoserine. Glycyl lysine isopeptide (Lys-Gly) (interchain with G-Cter in SUMO2) cross-links involve residues Lys-637, Lys-665, Lys-687, and Lys-723. The interval 720–823 is disordered; it reads LPLKMEPQSP…DGSLQHARPT (104 aa). The residue at position 728 (Ser-728) is a Phosphoserine. Glycyl lysine isopeptide (Lys-Gly) (interchain with G-Cter in SUMO2) cross-links involve residues Lys-733, Lys-734, and Lys-737. At Ser-742 the chain carries Phosphoserine. Positions 743–747 match the CTBP-binding motif 1 motif; the sequence is PFDLT. Glycyl lysine isopeptide (Lys-Gly) (interchain with G-Cter in SUMO2) cross-links involve residues Lys-751, Lys-754, and Lys-762. Over residues 758–773 the composition is skewed to polar residues; the sequence is SGPSKPSGTPATSQDQ. Positions 774–778 match the CTBP-binding motif 2 motif; it reads PLDLS. Glycyl lysine isopeptide (Lys-Gly) (interchain with G-Cter in SUMO2) cross-links involve residues Lys-789, Lys-802, and Lys-803. A compositionally biased stretch (basic and acidic residues) spans 791–805; the sequence is TEPRKNHVFGEKKGS. A compositionally biased stretch (polar residues) spans 806-816; that stretch reads NMDTRPSSDGS. Glycyl lysine isopeptide (Lys-Gly) (interchain with G-Cter in SUMO2) cross-links involve residues Lys-837, Lys-846, Lys-848, and Lys-879. 3 C2H2-type zinc fingers span residues 914-936, 942-965, and 971-993; these read YTCRYCGKIFPRSANLTRHLRTH, YRCKYCDRSFSISSNLQRHVRNIH, and FKCHLCDRCFGQQTNLDRHLKKH. A Glycyl lysine isopeptide (Lys-Gly) (interchain with G-Cter in SUMO2) cross-link involves residue Lys-1020. Residues 1032-1043 are compositionally biased toward polar residues; sequence IGNSNHGSQSPR. The tract at residues 1032-1107 is disordered; it reads IGNSNHGSQS…GVTRLDEEIP (76 aa). A phosphoserine mark is found at Ser-1039 and Ser-1041. Positions 1044-1059 are enriched in basic and acidic residues; that stretch reads NMEERMNGSHFKDKKA. Glycyl lysine isopeptide (Lys-Gly) (interchain with G-Cter in SUMO2) cross-links involve residues Lys-1055 and Lys-1058. Residues 1068–1088 are compositionally biased toward acidic residues; that stretch reads LLDDEEVEDEVLLDEEDEDND. The span at 1089 to 1104 shows a compositional bias: basic and acidic residues; that stretch reads IPGKPRKELGVTRLDE. Residues Lys-1122, Lys-1129, Lys-1134, Lys-1151, Lys-1178, and Lys-1186 each participate in a glycyl lysine isopeptide (Lys-Gly) (interchain with G-Cter in SUMO2) cross-link.

In terms of assembly, homooligomer. Interacts with CTBP1. Interacts with SMAD3 (via MH2 domain); the interaction is direct. Interacts with SMAD4; through interaction with SMAD3. Interacts with CREBBP, KAT2B and histone deacetylases. Interacts with MAPK8 and MAPK9; inhibits JNK signaling. Interacts with SUV39H1 (via SET domain); enhances MECOM transcriptional repression activity. Post-translationally, may be acetylated by CREBBP and KAT2B.

Its subcellular location is the nucleus. It localises to the nucleus speckle. It is found in the cytoplasm. It carries out the reaction L-lysyl(9)-[histone H3] + S-adenosyl-L-methionine = N(6)-methyl-L-lysyl(9)-[histone H3] + S-adenosyl-L-homocysteine + H(+). Its function is as follows. Functions as a transcriptional regulator binding to DNA sequences in the promoter region of target genes and regulating positively or negatively their expression. Oncogene which plays a role in development, cell proliferation and differentiation. May also play a role in apoptosis through regulation of the JNK and TGF-beta signaling. Involved in hematopoiesis. Functionally, displays histone methyltransferase activity and monomethylates 'Lys-9' of histone H3 (H3K9me1) in vitro. Probably catalyzes the monomethylation of free histone H3 in the cytoplasm which is then transported to the nucleus and incorporated into nucleosomes where SUV39H methyltransferases use it as a substrate to catalyze histone H3 'Lys-9' trimethylation. Likely to be one of the primary histone methyltransferases along with PRDM16 that direct cytoplasmic H3K9me1 methylation. This is Histone-lysine N-methyltransferase MECOM from Mus musculus (Mouse).